The sequence spans 448 residues: Divalent metal cation transporter MntH (448 aa).

The span at 1 to 10 shows a compositional bias: basic and acidic residues; the sequence is MKKDKTERTK. Positions 1-20 are disordered; that stretch reads MKKDKTERTKQSWRKAQNAP. 11 helical membrane passes run 41–61, 69–89, 117–137, 147–167, 176–196, 215–235, 270–290, 307–327, 363–383, 384–404, and 424–444; these read LFAF…PGNW, SEFG…AVLL, GFVL…AEVI, FGIP…LVLF, IEVI…AEMV, IVTN…TVMP, FSLT…AAAF, LLNP…ALLA, VLAI…GINE, LLIF…IPLV, and IISW…LFYT.

The protein belongs to the NRAMP family.

It is found in the cell membrane. Its function is as follows. H(+)-stimulated, divalent metal cation uptake system. The sequence is that of Divalent metal cation transporter MntH from Listeria monocytogenes serotype 4b (strain CLIP80459).